The following is a 363-amino-acid chain: NAD(P)H-quinone oxidoreductase subunit 1, chloroplastic (363 aa).

Transmembrane regions (helical) follow at residues 30-50, 104-124, 127-147, 248-268, 300-320, and 343-363; these read LIPIFTLVLGITIGVLVIVWL, IAVISILLSYLVIPFSYHLVL, LSIGVFLWIAISSIAPVGLLM, YSGIKFGLFYVASYLNLLVSS, VFGTIIGIFITLAKTYLFLFI, and FLLPISLGNLLLTTCSQLISL.

Belongs to the complex I subunit 1 family. NDH is composed of at least 16 different subunits, 5 of which are encoded in the nucleus.

It is found in the plastid. It localises to the chloroplast thylakoid membrane. The catalysed reaction is a plastoquinone + NADH + (n+1) H(+)(in) = a plastoquinol + NAD(+) + n H(+)(out). It catalyses the reaction a plastoquinone + NADPH + (n+1) H(+)(in) = a plastoquinol + NADP(+) + n H(+)(out). NDH shuttles electrons from NAD(P)H:plastoquinone, via FMN and iron-sulfur (Fe-S) centers, to quinones in the photosynthetic chain and possibly in a chloroplast respiratory chain. The immediate electron acceptor for the enzyme in this species is believed to be plastoquinone. Couples the redox reaction to proton translocation, and thus conserves the redox energy in a proton gradient. The polypeptide is NAD(P)H-quinone oxidoreductase subunit 1, chloroplastic (Lactuca sativa (Garden lettuce)).